The primary structure comprises 270 residues: Pantoate kinase (270 aa).

This sequence belongs to the GHMP kinase family. PoK subfamily.

It carries out the reaction (R)-pantoate + ATP = (R)-4-phosphopantoate + ADP + H(+). It participates in cofactor biosynthesis; coenzyme A biosynthesis. Its function is as follows. Phosphorylates (R)-pantoate to form (R)-4-phosphopantoate in the CoA biosynthesis pathway. The chain is Pantoate kinase from Methanocaldococcus jannaschii (strain ATCC 43067 / DSM 2661 / JAL-1 / JCM 10045 / NBRC 100440) (Methanococcus jannaschii).